Reading from the N-terminus, the 147-residue chain is Transcription antitermination protein NusB (147 aa).

This sequence belongs to the NusB family.

Involved in transcription antitermination. Required for transcription of ribosomal RNA (rRNA) genes. Binds specifically to the boxA antiterminator sequence of the ribosomal RNA (rrn) operons. This chain is Transcription antitermination protein NusB, found in Teredinibacter turnerae (strain ATCC 39867 / T7901).